A 282-amino-acid polypeptide reads, in one-letter code: uncharacterized protein (282 aa).

Helical transmembrane passes span 18 to 38 (PIVLLIPVPGSSVIHDLWAGT), 40 to 60 (LLVVFGISVLLTFYPGWVTIG), 87 to 107 (LWIVLAIGFLTAALAGGTPVV), 119 to 139 (ALHFLRITALSVVLLALGAMV), 164 to 184 (IPVDEWAVALALALRAFPMLI), and 260 to 280 (VTLAITAMASGTAVAIESLIL).

Belongs to the CbiQ family.

It is found in the cell membrane. This is an uncharacterized protein from Mycobacterium tuberculosis (strain CDC 1551 / Oshkosh).